The following is a 129-amino-acid chain: D-ribose pyranase (129 aa).

Residue H20 is the Proton donor of the active site. Residues D28, H96, and 118–120 each bind substrate; that span reads YAN.

It belongs to the RbsD / FucU family. RbsD subfamily. In terms of assembly, homodecamer.

It is found in the cytoplasm. It catalyses the reaction beta-D-ribopyranose = beta-D-ribofuranose. The protein operates within carbohydrate metabolism; D-ribose degradation; D-ribose 5-phosphate from beta-D-ribopyranose: step 1/2. Functionally, catalyzes the interconversion of beta-pyran and beta-furan forms of D-ribose. The chain is D-ribose pyranase from Staphylococcus saprophyticus subsp. saprophyticus (strain ATCC 15305 / DSM 20229 / NCIMB 8711 / NCTC 7292 / S-41).